The following is an 81-amino-acid chain: UPF0180 protein BLi01634/BL05144 (81 aa).

Belongs to the UPF0180 family.

This chain is UPF0180 protein BLi01634/BL05144, found in Bacillus licheniformis (strain ATCC 14580 / DSM 13 / JCM 2505 / CCUG 7422 / NBRC 12200 / NCIMB 9375 / NCTC 10341 / NRRL NRS-1264 / Gibson 46).